A 459-amino-acid chain; its full sequence is 2-(3-amino-3-carboxypropyl)histidine synthase subunit 1 (459 aa).

A disordered region spans residues 1 to 68 (MEDDRAQVDL…AGANTSIEDS (68 aa)). The segment covering 41 to 61 (SAAAGKSSSSSSNSTSQPAGA) has biased composition (low complexity). Positions 165, 268, and 403 each coordinate [4Fe-4S] cluster.

The protein belongs to the DPH1/DPH2 family. DPH1 subfamily. In terms of assembly, component of the 2-(3-amino-3-carboxypropyl)histidine synthase complex composed of dph-1, dph-2, dph-3 and a NADH-dependent reductase, predominantly cbr-1. [4Fe-4S] cluster serves as cofactor.

The protein localises to the cytoplasm. The catalysed reaction is L-histidyl-[translation elongation factor 2] + S-adenosyl-L-methionine = 2-[(3S)-amino-3-carboxypropyl]-L-histidyl-[translation elongation factor 2] + S-methyl-5'-thioadenosine + H(+). It functions in the pathway protein modification; peptidyl-diphthamide biosynthesis. In terms of biological role, catalyzes the first step of diphthamide biosynthesis, a post-translational modification of histidine which occurs in elongation factor 2. Dph-1 and dph-2 transfer a 3-amino-3-carboxypropyl (ACP) group from S-adenosyl-L-methionine (SAM) to a histidine residue, the reaction is assisted by a reduction system comprising dph-3 and a NADH-dependent reductase, predominantly cbr-1. The sequence is that of 2-(3-amino-3-carboxypropyl)histidine synthase subunit 1 (dph-1) from Neurospora crassa (strain ATCC 24698 / 74-OR23-1A / CBS 708.71 / DSM 1257 / FGSC 987).